A 128-amino-acid polypeptide reads, in one-letter code: Large ribosomal subunit protein bL17 (128 aa).

It belongs to the bacterial ribosomal protein bL17 family. In terms of assembly, part of the 50S ribosomal subunit. Contacts protein L32.

The sequence is that of Large ribosomal subunit protein bL17 from Pseudomonas fluorescens (strain Pf0-1).